Consider the following 188-residue polypeptide: Acireductone dioxygenase (188 aa).

Residues histidine 97, histidine 99, glutamate 103, and histidine 141 each coordinate Fe(2+). Ni(2+) contacts are provided by histidine 97, histidine 99, glutamate 103, and histidine 141.

This sequence belongs to the acireductone dioxygenase (ARD) family. In terms of assembly, monomer. It depends on Fe(2+) as a cofactor. Ni(2+) is required as a cofactor.

It catalyses the reaction 1,2-dihydroxy-5-(methylsulfanyl)pent-1-en-3-one + O2 = 3-(methylsulfanyl)propanoate + CO + formate + 2 H(+). It carries out the reaction 1,2-dihydroxy-5-(methylsulfanyl)pent-1-en-3-one + O2 = 4-methylsulfanyl-2-oxobutanoate + formate + 2 H(+). It participates in amino-acid biosynthesis; L-methionine biosynthesis via salvage pathway; L-methionine from S-methyl-5-thio-alpha-D-ribose 1-phosphate: step 5/6. In terms of biological role, catalyzes 2 different reactions between oxygen and the acireductone 1,2-dihydroxy-3-keto-5-methylthiopentene (DHK-MTPene) depending upon the metal bound in the active site. Fe-containing acireductone dioxygenase (Fe-ARD) produces formate and 2-keto-4-methylthiobutyrate (KMTB), the alpha-ketoacid precursor of methionine in the methionine recycle pathway. Ni-containing acireductone dioxygenase (Ni-ARD) produces methylthiopropionate, carbon monoxide and formate, and does not lie on the methionine recycle pathway. This is Acireductone dioxygenase from Xanthomonas axonopodis pv. citri (strain 306).